Consider the following 140-residue polypeptide: Large ribosomal subunit protein uL11 (140 aa).

The protein belongs to the universal ribosomal protein uL11 family. In terms of assembly, part of the ribosomal stalk of the 50S ribosomal subunit. Interacts with L10 and the large rRNA to form the base of the stalk. L10 forms an elongated spine to which L12 dimers bind in a sequential fashion forming a multimeric L10(L12)X complex. One or more lysine residues are methylated.

Functionally, forms part of the ribosomal stalk which helps the ribosome interact with GTP-bound translation factors. In Brachyspira hyodysenteriae (strain ATCC 49526 / WA1), this protein is Large ribosomal subunit protein uL11.